The sequence spans 327 residues: Protoheme IX farnesyltransferase (327 aa).

The next 8 helical transmembrane spans lie at 35 to 55, 60 to 80, 106 to 126, 129 to 149, 157 to 177, 185 to 205, 234 to 254, and 283 to 303; these read LIPLLLATTLGGMALSEGWPL, LVCTLGGGALASAAAGVLNCL, SAFIGAIACTLAAAMLLVSGV, LAAGLSLLGLCSYVLLYTALL, IVIGGVAGAIPPLVGAAAATG, WLFALVMVWTPAHFWALALLL, GWITVLLSSLGVFALPSGGAF, and AKALFRWSILYLFGVCLLLIL.

Belongs to the UbiA prenyltransferase family. Protoheme IX farnesyltransferase subfamily.

It localises to the cell inner membrane. It catalyses the reaction heme b + (2E,6E)-farnesyl diphosphate + H2O = Fe(II)-heme o + diphosphate. The protein operates within porphyrin-containing compound metabolism; heme O biosynthesis; heme O from protoheme: step 1/1. In terms of biological role, converts heme B (protoheme IX) to heme O by substitution of the vinyl group on carbon 2 of heme B porphyrin ring with a hydroxyethyl farnesyl side group. This chain is Protoheme IX farnesyltransferase, found in Synechococcus sp. (strain CC9605).